Here is a 2773-residue protein sequence, read N- to C-terminus: Peramine synthetase A (2773 aa).

The adenylation 1 stretch occupies residues 246-644 (FEDQVYSQPL…GRKDAQVKIR (399 aa)). The Carrier 1 domain maps to 774–850 (QPTCEMEERM…DLAKNCSQTL (77 aa)). An O-(pantetheine 4'-phosphoryl)serine modification is found at S811. The segment at 888 to 1301 (QDAYPCTRLQ…MSSAEDLEQI (414 aa)) is condensation. An adenylation 2 region spans residues 1321 to 1720 (ADQVQARPDS…GRKDTQVKVR (400 aa)). Positions 1810-1949 (IGRDFVGWSS…IIQHLASLGS (140 aa)) are methylation (Met) domain. The interval 2250–2271 (MLSESLQQKAPPTARKRLPSTA) is disordered. A Carrier 2 domain is found at 2267–2345 (LPSTAPERAM…HLLQTAAAGV (79 aa)). An O-(pantetheine 4'-phosphoryl)serine modification is found at S2304. The interval 2397–2715 (TVVLTGANGF…LQDLADTARS (319 aa)) is thiesterase (TE) domain.

It belongs to the NRP synthetase family. Pantetheine 4'-phosphate serves as cofactor.

It catalyses the reaction (S)-1-pyrroline-5-carboxylate + L-arginine + S-adenosyl-L-methionine + 2 ATP = peramine + 2 AMP + S-adenosyl-L-homocysteine + 2 diphosphate + H2O + 2 H(+). Nonribosomal peptide synthetase involved in the biosynthesis of peramine, a pyrrolopyrazine synthesized in association with the grass host that protects the plant from insect herbivory. The single multifunctional NRPS perA seems to be responsible for all catalytic steps in the biosynthesis of peramine. The condensation domain of perA is proposed to catalyze formation of a peptide bond between 1-pyrroline-5-carboxylate and arginine. The methylation domain of perA would catalyze the N-methylation of the alpha-amino group of arginine. The reductase domain is proposed to be responsible for reduction of the thioester and the cyclization to form an iminium ion resulting in release from the peptide synthetase. Deprotonation of this intermediate and oxidation of the pyrroline ring would give rise to peramine. This final oxidation to give the pyrrole functionality may be spontaneous. This chain is Peramine synthetase A, found in Epichloe festucae (strain Fl1).